Reading from the N-terminus, the 192-residue chain is Peptidyl-prolyl cis-trans isomerase 1 (192 aa).

In terms of domain architecture, PPIase cyclophilin-type spans 25 to 188; it reads FFDVSIGEEP…KTVTIADCGE (164 aa).

Belongs to the cyclophilin-type PPIase family.

The enzyme catalyses [protein]-peptidylproline (omega=180) = [protein]-peptidylproline (omega=0). PPIases accelerate the folding of proteins. It catalyzes the cis-trans isomerization of proline imidic peptide bonds in oligopeptides. The polypeptide is Peptidyl-prolyl cis-trans isomerase 1 (cyn-1) (Caenorhabditis elegans).